Consider the following 1263-residue polypeptide: Histone-lysine N-methyltransferase EHMT2 (1263 aa).

Disordered regions lie at residues 1 to 314 and 332 to 439; these read MRGL…LEEW and DERV…EYME. The segment covering 26 to 39 has biased composition (basic residues); it reads GRGRGGAHRGRGRP. Position 40 is an asymmetric dimethylarginine (R40). Positions 83–95 are enriched in basic and acidic residues; that stretch reads LEKEPRGAAERVH. S97 bears the Phosphoserine mark. Phosphothreonine is present on T101. Phosphoserine is present on residues S104 and S193. K239 is subject to N6,N6,N6-trimethyllysine; by EHMT2; alternate. K239 is subject to N6,N6-dimethyllysine; by EHMT2; alternate. Positions 252–270 are enriched in basic and acidic residues; sequence PEKRPPEVQHFRMSDDMHL. Residues K272 and K282 each participate in a glycyl lysine isopeptide (Lys-Gly) (interchain with G-Cter in SUMO2) cross-link. Phosphoserine is present on residues S285, S294, and S298. Composition is skewed to basic and acidic residues over residues 302–312 and 332–343; these read ILEKGEPRPLE and DERVDSDSKSEV. The span at 350–380 shows a compositional bias: acidic residues; that stretch reads LSEEEEEEEEEEEEEEEEEEEEEEEEEDEES. Basic residues predominate over residues 391–400; that stretch reads GRRKAKKKWR. S403, S465, and S466 each carry phosphoserine. T608 bears the Phosphothreonine mark. The tract at residues 621-647 is disordered; sequence LAHDAPGRADTSQPSARMRGHGEPRRP. Residue K687 forms a Glycyl lysine isopeptide (Lys-Gly) (interchain with G-Cter in SUMO2) linkage. ANK repeat units follow at residues 702-731, 737-766, 770-799, 803-833, 837-866, 870-899, and 903-932; these read FHPR…DPNF, SKRT…NINA, QQRT…CVYS, DGST…DVNA, GGWT…DVTL, EENI…DLHA, and HGDT…NPEL. The tract at residues 870-872 is histone H3K9me binding; the sequence is EEN. The Pre-SET domain maps to 1025 to 1088; sequence QHCTCVDDCS…SCKNRVVQSG (64 aa). The Zn(2+) site is built by C1027, C1029, C1033, C1038, C1040, C1070, C1074, C1076, and C1080. Positions 1091 to 1208 constitute an SET domain; it reads VRLQLYRTAK…TGEELGFDYG (118 aa). Residues 1101–1103, Y1138, and 1165–1166 each bind S-adenosyl-L-methionine; these read MGW and NH. The interval 1127 to 1146 is interaction with histone H3; sequence DAEADVREDDSYLFDLDNKD. C1168 lines the Zn(2+) pocket. The segment at 1207–1210 is interaction with histone H3; that stretch reads YGDR. One can recognise a Post-SET domain in the interval 1217 to 1233; the sequence is KYFTCQCGSEKCKHSAE. Zn(2+) contacts are provided by C1221, C1223, and C1228. S1257 carries the phosphoserine modification. Residue T1263 is modified to Phosphothreonine.

It belongs to the class V-like SAM-binding methyltransferase superfamily. Histone-lysine methyltransferase family. Suvar3-9 subfamily. As to quaternary structure, heterodimer; heterodimerizes with EHMT1/GLP. Interacts with GFI1B and WIZ. Part of the E2F6.com-1 complex in G0 phase composed of E2F6, MGA, MAX, TFDP1, CBX3, BAT8, EHMT1, RING1, RNF2, MBLR, L3MBTL2 and YAF2. Part of a complex composed of TRIM28, HDAC1, HDAC2 and EHMT2. Interacts with UHRF1. Interacts with CDYL. Interacts with REST only in the presence of CDYL. Part of a complex containing at least CDYL, REST, WIZ, SETB1, EHMT1 and EHMT2. Interacts with PRDM9 and CDYL; interaction only takes place when PRDM9 is bound to hotspot DNA. Interacts with SMYD5. Post-translationally, methylated at Lys-239; automethylated. Ubiquitous.

The protein resides in the nucleus. It is found in the chromosome. It carries out the reaction N(6)-methyl-L-lysyl(9)-[histone H3] + S-adenosyl-L-methionine = N(6),N(6)-dimethyl-L-lysyl(9)-[histone H3] + S-adenosyl-L-homocysteine + H(+). The enzyme catalyses L-lysyl(9)-[histone H3] + S-adenosyl-L-methionine = N(6)-methyl-L-lysyl(9)-[histone H3] + S-adenosyl-L-homocysteine + H(+). Histone methyltransferase that specifically mono- and dimethylates 'Lys-9' of histone H3 (H3K9me1 and H3K9me2, respectively) in euchromatin. H3K9me represents a specific tag for epigenetic transcriptional repression by recruiting HP1 proteins to methylated histones. Also mediates monomethylation of 'Lys-56' of histone H3 (H3K56me1) in G1 phase, leading to promote interaction between histone H3 and PCNA and regulating DNA replication. Also weakly methylates 'Lys-27' of histone H3 (H3K27me). Also required for DNA methylation, the histone methyltransferase activity is not required for DNA methylation, suggesting that these 2 activities function independently. Probably targeted to histone H3 by different DNA-binding proteins like E2F6, MGA, MAX and/or DP1. May also methylate histone H1. In addition to the histone methyltransferase activity, also methylates non-histone proteins: mediates dimethylation of 'Lys-373' of p53/TP53. Also methylates CDYL, WIZ, ACIN1, DNMT1, HDAC1, ERCC6, KLF12 and itself. This is Histone-lysine N-methyltransferase EHMT2 (Ehmt2) from Mus musculus (Mouse).